Reading from the N-terminus, the 146-residue chain is Sperm surface protein Sp17 (146 aa).

Over residues 76–88 (EHESEKCEAEEKS) the composition is skewed to basic and acidic residues. The disordered stretch occupies residues 76-109 (EHESEKCEAEEKSQSVTEEETPVLTIDSEDDKDK). A compositionally biased stretch (acidic residues) spans 92–108 (TEEETPVLTIDSEDDKD). Positions 110–139 (EEMAALKIQAAFRGHLAREDVKKIRTNKAE) constitute an IQ domain.

Homodimer. May interact with ROPN1. Post-translationally, the N-terminus is blocked. Testis- and sperm-specific.

The protein resides in the membrane. Sperm surface zona pellucida binding protein. Helps to bind spermatozoa to the zona pellucida with high affinity. Might function in binding zona pellucida and carbohydrates. The sequence is that of Sperm surface protein Sp17 (SPA17) from Oryctolagus cuniculus (Rabbit).